A 128-amino-acid chain; its full sequence is Large ribosomal subunit protein bL12 (128 aa).

This sequence belongs to the bacterial ribosomal protein bL12 family. As to quaternary structure, homodimer. Part of the ribosomal stalk of the 50S ribosomal subunit. Forms a multimeric L10(L12)X complex, where L10 forms an elongated spine to which 2 to 4 L12 dimers bind in a sequential fashion. Binds GTP-bound translation factors.

Forms part of the ribosomal stalk which helps the ribosome interact with GTP-bound translation factors. Is thus essential for accurate translation. In Synechocystis sp. (strain ATCC 27184 / PCC 6803 / Kazusa), this protein is Large ribosomal subunit protein bL12.